An 860-amino-acid chain; its full sequence is Leucine-rich repeat and death domain-containing protein 1 (860 aa).

A disordered region spans residues 1 to 103 (MSEKEGMSEV…TGTSQSLSSL (103 aa)). Residues 50-72 (KSSNQIYETHPRQNTLESTSSSG) show a composition bias toward polar residues. Positions 90 to 103 (TSTRTGTSQSLSSL) are enriched in low complexity. 26 LRR repeats span residues 139-163 (LGAD…ILKI), 164-186 (KYVK…DSGD), 187-210 (LLGL…IQLL), 211-233 (HNLR…ISQL), 235-256 (NIRQ…LECL), 257-279 (GNLE…LPSL), 281-302 (TLRV…LCFL), 303-325 (PKLI…IREL), 326-348 (KNLE…IFQL), 350-371 (KIKE…IENF), 372-394 (RELR…ISCC), 396-417 (MLEC…IHKL), 419-440 (NLRK…ISHL), 441-463 (NNIC…IKNC), 465-486 (KIIK…LCAL), 487-510 (DSLY…SFSK), 512-532 (LLHL…FCSL), 533-555 (INLK…ISNM), 557-578 (SLHV…LCTL), 579-601 (ENLQ…ICNL), 603-624 (GIQK…LCQL), 627-650 (LEQL…LSNM), 651-673 (TQLK…IGEL), 675-696 (NLVS…LLSL), 697-719 (NDLQ…IYNI), and 721-742 (SLKE…ICKG). Positions 764 to 852 (EKIFKIVANN…EIMDKITALN (89 aa)) constitute a Death domain. One copy of the LRR 27 repeat lies at 856-860 (RAIKF).

The chain is Leucine-rich repeat and death domain-containing protein 1 (LRRD1) from Homo sapiens (Human).